Here is a 131-residue protein sequence, read N- to C-terminus: Probable lactoylglutathione lyase (131 aa).

A VOC domain is found at 2–126 (FLLHTMIRVG…DGYKIELIQT (125 aa)). His-5 contacts Ni(2+). Arg-9 serves as a coordination point for substrate. Glu-56 contacts Ni(2+). Substrate contacts are provided by Asn-60 and His-74. The Ni(2+) site is built by His-74 and Glu-122. Catalysis depends on Glu-122, which acts as the Proton donor/acceptor.

This sequence belongs to the glyoxalase I family. It depends on Ni(2+) as a cofactor.

It carries out the reaction (R)-S-lactoylglutathione = methylglyoxal + glutathione. The protein operates within secondary metabolite metabolism; methylglyoxal degradation; (R)-lactate from methylglyoxal: step 1/2. Its function is as follows. Catalyzes the conversion of hemimercaptal, formed from methylglyoxal and glutathione, to S-lactoylglutathione. This is Probable lactoylglutathione lyase (gloA) from Synechocystis sp. (strain ATCC 27184 / PCC 6803 / Kazusa).